The following is a 359-amino-acid chain: Photosystem II protein D1 1 (359 aa).

Transmembrane regions (helical) follow at residues 29–46 (YVGW…AATI), 118–133 (HFLI…EWEL), and 142–156 (WICV…AASA). Chlorophyll a is bound at residue H118. Y126 serves as a coordination point for pheophytin a. 2 residues coordinate [CaMn4O5] cluster: D170 and E189. Residues 197 to 218 (FHMLGVAGVFGGSLFSAMHGSL) traverse the membrane as a helical segment. H198 provides a ligand contact to chlorophyll a. Residues H215 and 264 to 265 (SF) each bind a quinone. H215 provides a ligand contact to Fe cation. H272 is a binding site for Fe cation. Residues 274 to 288 (FLAAWPVVGIWFTAL) traverse the membrane as a helical segment. Residues H332, E333, D342, and A344 each coordinate [CaMn4O5] cluster. A propeptide spanning residues 345 to 359 (AAESTPVALQAPAIG) is cleaved from the precursor.

The protein belongs to the reaction center PufL/M/PsbA/D family. In terms of assembly, PSII is composed of 1 copy each of membrane proteins PsbA, PsbB, PsbC, PsbD, PsbE, PsbF, PsbH, PsbI, PsbJ, PsbK, PsbL, PsbM, PsbT, PsbX, PsbY, PsbZ, Psb30/Ycf12, peripheral proteins PsbO, CyanoQ (PsbQ), PsbU, PsbV and a large number of cofactors. It forms dimeric complexes. It depends on The D1/D2 heterodimer binds P680, chlorophylls that are the primary electron donor of PSII, and subsequent electron acceptors. It shares a non-heme iron and each subunit binds pheophytin, quinone, additional chlorophylls, carotenoids and lipids. D1 provides most of the ligands for the Mn4-Ca-O5 cluster of the oxygen-evolving complex (OEC). There is also a Cl(-1) ion associated with D1 and D2, which is required for oxygen evolution. The PSII complex binds additional chlorophylls, carotenoids and specific lipids. as a cofactor. Post-translationally, tyr-161 forms a radical intermediate that is referred to as redox-active TyrZ, YZ or Y-Z. C-terminally processed by CtpA; processing is essential to allow assembly of the oxygen-evolving complex and thus photosynthetic growth.

It localises to the cellular thylakoid membrane. It catalyses the reaction 2 a plastoquinone + 4 hnu + 2 H2O = 2 a plastoquinol + O2. Its function is as follows. Photosystem II (PSII) is a light-driven water:plastoquinone oxidoreductase that uses light energy to abstract electrons from H(2)O, generating O(2) and a proton gradient subsequently used for ATP formation. It consists of a core antenna complex that captures photons, and an electron transfer chain that converts photonic excitation into a charge separation. The D1/D2 (PsbA/PsbD) reaction center heterodimer binds P680, the primary electron donor of PSII as well as several subsequent electron acceptors. This is Photosystem II protein D1 1 from Synechococcus sp. (strain CC9605).